Reading from the N-terminus, the 189-residue chain is Receptor activity-modifying protein 2 (189 aa).

The signal sequence occupies residues 1–44 (MAPLRVERAPGGSRLGVTRAQRPTALCLPPLLLLLLLLLGAVSA). Over 45–157 (SPESLNQSLP…VQPTFSDPPE (113 aa)) the chain is Extracellular. Residues 49 to 61 (LNQSLPESQNQSH) show a composition bias toward polar residues. The interval 49–69 (LNQSLPESQNQSHPTEDSLVS) is disordered. Asn-50, Asn-58, Asn-99, and Asn-144 each carry an N-linked (GlcNAc...) asparagine glycan. 2 disulfide bridges follow: Cys-83–Cys-113 and Cys-98–Cys-145. Residues 158–179 (DVLLAMIIAPICLIPFLVTLVV) traverse the membrane as a helical segment. At 180–189 (WRSKDSDAQA) the chain is on the cytoplasmic side.

The protein belongs to the RAMP family. In terms of assembly, heterodimer of CALCRL and RAMP2; the interaction forms the receptor complex for adrenomedullin/ADM. Heterodimer of CALCR and RAMP2; interaction forms the AMYR2 receptor complex for calcitonin/CALC and amylin/IAPP. Ubiquitous. Expressed predominantly in embryonic brain, lung and gut and in adult heart, lung, skeletal muscle and brain.

The protein resides in the cell membrane. Its function is as follows. Accessory protein that interacts with and modulates the function of G-protein coupled receptors including calcitonin gene-related peptide type 1 receptor (CALCRL) and calcitonin receptor (CALCR). Required for the transport of CALCRL to the plasma membrane. Together with CALCRL, form a receptor complex for adrenomedullin/ADM. Together with CALCR, act as a receptor complex for calcitonin/CT/CALC. Together with CALCR, also act as a receptor complex for amylin/IAPP. In Mus musculus (Mouse), this protein is Receptor activity-modifying protein 2.